Reading from the N-terminus, the 1830-residue chain is Dedicator of cytokinesis protein 2 (1830 aa).

Residues 8–69 (DKERHGVAIY…PKSFIHIKEV (62 aa)) form the SH3 domain. An N6-acetyllysine modification is found at K304. A C2 DOCK-type domain is found at 423–607 (RNDIYITLLQ…DVFSISTLVC (185 aa)). S588 and S593 each carry phosphoserine. K738 is subject to N6-acetyllysine. Positions 939 to 1476 (CMTAILNQMG…TSFVTAYKLP (538 aa)) are interaction with CRKL. The DOCKER domain maps to 1211 to 1622 (YKDNNREEMY…VEKEYGVREM (412 aa)). A compositionally biased stretch (polar residues) spans 1651–1665 (MNSDCSTPSKPTSES). Residues 1651 to 1704 (MNSDCSTPSKPTSESFDLELASPKTPRVEQEEPISPGSTLPEVKLRRSKKRTKR) are disordered. Residues S1685, S1706, S1731, and S1784 each carry the phosphoserine modification.

Belongs to the DOCK family. Homodimer. Interacts with RAC1 and RAC2. Interacts with CRKL and VAV. Interacts with CD3Z. Specifically expressed in hematopoietic cells. Highly expressed in peripheral blood leukocytes, and expressed at intermediate level in thymus and spleen. Expressed at very low level in the small intestine and colon.

It is found in the endomembrane system. It localises to the cytoplasm. The protein resides in the cytoskeleton. Involved in cytoskeletal rearrangements required for lymphocyte migration in response of chemokines. Activates RAC1 and RAC2, but not CDC42, by functioning as a guanine nucleotide exchange factor (GEF), which exchanges bound GDP for free GTP. May also participate in IL2 transcriptional activation via the activation of RAC2. This Homo sapiens (Human) protein is Dedicator of cytokinesis protein 2 (DOCK2).